The following is an 89-amino-acid chain: Neurotoxin beta-KTx 12 (89 aa).

An N-terminal signal peptide occupies residues 1 to 20 (MKQYIFFLALIVLVSTFAEA). The propeptide occupies 21 to 39 (GKKTEILDKVKKVFSKAKD). Residues 53–89 (ELGCPFIDKWCEDHCESKKLVGKCENFDCSCVKLGGK) form the BetaSPN-type CS-alpha/beta domain. Intrachain disulfides connect Cys56–Cys76, Cys63–Cys81, and Cys67–Cys83.

The protein belongs to the long chain scorpion toxin family. Class 2 subfamily. In terms of tissue distribution, expressed by the venom gland.

The protein localises to the secreted. Inhibits voltage-gated potassium channel. The sequence is that of Neurotoxin beta-KTx 12 from Lychas mucronatus (Chinese swimming scorpion).